The sequence spans 286 residues: Phosphate import ATP-binding protein PstB (286 aa).

The region spanning 40–281 is the ABC transporter domain; the sequence is VVAKDFSIFY…PRDRMTEDYI (242 aa). 72–79 is an ATP binding site; the sequence is GPSGCGKS.

Belongs to the ABC transporter superfamily. Phosphate importer (TC 3.A.1.7) family. As to quaternary structure, the complex is composed of two ATP-binding proteins (PstB), two transmembrane proteins (PstC and PstA) and a solute-binding protein (PstS).

It is found in the cell inner membrane. It carries out the reaction phosphate(out) + ATP + H2O = ADP + 2 phosphate(in) + H(+). Its function is as follows. Part of the ABC transporter complex PstSACB involved in phosphate import. Responsible for energy coupling to the transport system. The protein is Phosphate import ATP-binding protein PstB of Chlorobium luteolum (strain DSM 273 / BCRC 81028 / 2530) (Pelodictyon luteolum).